The primary structure comprises 195 residues: Xanthine phosphoribosyltransferase (195 aa).

The xanthine site is built by L20 and N27. Residue 128 to 132 (ANGQA) participates in 5-phospho-alpha-D-ribose 1-diphosphate binding. K156 is a binding site for xanthine.

It belongs to the purine/pyrimidine phosphoribosyltransferase family. Xpt subfamily. As to quaternary structure, homodimer.

The protein localises to the cytoplasm. The catalysed reaction is XMP + diphosphate = xanthine + 5-phospho-alpha-D-ribose 1-diphosphate. Its pathway is purine metabolism; XMP biosynthesis via salvage pathway; XMP from xanthine: step 1/1. Functionally, converts the preformed base xanthine, a product of nucleic acid breakdown, to xanthosine 5'-monophosphate (XMP), so it can be reused for RNA or DNA synthesis. This chain is Xanthine phosphoribosyltransferase, found in Limosilactobacillus fermentum (strain NBRC 3956 / LMG 18251) (Lactobacillus fermentum).